The chain runs to 127 residues: Large ribosomal subunit protein bL20 (127 aa).

The protein belongs to the bacterial ribosomal protein bL20 family.

Binds directly to 23S ribosomal RNA and is necessary for the in vitro assembly process of the 50S ribosomal subunit. It is not involved in the protein synthesizing functions of that subunit. In Streptomyces avermitilis (strain ATCC 31267 / DSM 46492 / JCM 5070 / NBRC 14893 / NCIMB 12804 / NRRL 8165 / MA-4680), this protein is Large ribosomal subunit protein bL20.